Consider the following 1847-residue polypeptide: Peripheral-type benzodiazepine receptor-associated protein 1 (1847 aa).

Disordered regions lie at residues 57–81 (EESS…GTET), 282–318 (NQRE…EDDV), and 560–626 (SGPK…DTAS). Low complexity-rich tracts occupy residues 294 to 310 (GSTA…GAPG) and 600 to 613 (SLSN…IHNS). The SH3 1 domain maps to 651-718 (ARIQVFLARY…PSNFVERVSD (68 aa)). Positions 728–787 (ELADSSHSSGPELSFLSGGGGGCSSGGQSSGGRSQPRPEEEATGDELSLSPPPEGLGEPL) are disordered. Residues 744–757 (SGGGGGCSSGGQSS) are compositionally biased toward gly residues. Fibronectin type-III domains follow at residues 789–880 (VPYP…AGAG), 882–974 (VPSQ…TLPA), and 979–1077 (APLD…PALA). Disordered stretches follow at residues 1107–1174 (LGYT…EGPD), 1191–1215 (DAGP…VCHR), 1240–1307 (NSLV…ILEQ), 1322–1478 (FSIP…ESSL), and 1514–1616 (PTDG…SHQD). Positions 1122-1133 (TQDSPASLSTEM) are enriched in polar residues. Basic and acidic residues predominate over residues 1203 to 1215 (LTQKEPSTEVCHR). The span at 1253–1266 (DIQEEEEEEEEEEE) shows a compositional bias: acidic residues. Residues 1272–1284 (WSFQKQVAGNSIG) show a composition bias toward polar residues. Composition is skewed to acidic residues over residues 1296-1305 (CETDSDEEIL) and 1325-1335 (PEEEEEEDEEE). Positions 1340-1352 (PGPSSSSQDPSQP) are enriched in low complexity. Basic and acidic residues-rich tracts occupy residues 1412–1421 (RPQDPREHCS) and 1546–1578 (AWEK…ESRG). One can recognise an SH3 2 domain in the interval 1617-1685 (LPLRVFVALF…PCNMVAEVAV (69 aa)). Disordered regions lie at residues 1701–1747 (PPNV…PGPP) and 1818–1847 (LEGP…RVQC). Positions 1756-1823 (KTSRPMVAAF…PSNFLEGPGP (68 aa)) constitute an SH3 3 domain.

The protein belongs to the RIMBP family. In terms of assembly, interacts with RIMS1 and RIMS2. Interacts with TSPO. Interacts with CACNA1A. Specifically expressed in brain. High expression level in the limbic system such as the nucleus accumbens, septum, and hippocampus, as well as on the cerebellum and pineal gland. Abundant in the CA1 region of the hippocampus.

The protein localises to the cytoplasm. Its subcellular location is the mitochondrion. Functionally, required for synaptic transmission regulation. It probably controls the recruitement of voltage-gated calcium channels to the presynaptic membrane, and modulates neurotransmitter release. The protein is Peripheral-type benzodiazepine receptor-associated protein 1 of Rattus norvegicus (Rat).